Reading from the N-terminus, the 872-residue chain is Alanine--tRNA ligase (872 aa).

Residues histidine 567, histidine 571, cysteine 669, and histidine 673 each coordinate Zn(2+).

The protein belongs to the class-II aminoacyl-tRNA synthetase family. It depends on Zn(2+) as a cofactor.

It is found in the cytoplasm. It carries out the reaction tRNA(Ala) + L-alanine + ATP = L-alanyl-tRNA(Ala) + AMP + diphosphate. In terms of biological role, catalyzes the attachment of alanine to tRNA(Ala) in a two-step reaction: alanine is first activated by ATP to form Ala-AMP and then transferred to the acceptor end of tRNA(Ala). Also edits incorrectly charged Ser-tRNA(Ala) and Gly-tRNA(Ala) via its editing domain. The sequence is that of Alanine--tRNA ligase from Streptococcus thermophilus (strain ATCC BAA-491 / LMD-9).